Consider the following 1066-residue polypeptide: Pumilio homolog 2 (1066 aa).

The tract at residues 1–260 (MNHDFQALAL…ATVGLFDYNS (260 aa)) is interaction with SNAPIN. Ser67, Ser82, and Ser102 each carry phosphoserine. The segment at 106-204 (KLDSRFRKGN…NPSEGLGPLP (99 aa)) is disordered. The segment covering 119-133 (RDAETDGPEKGDQKG) has biased composition (basic and acidic residues). Residues Ser136, Ser178, and Ser182 each carry the phosphoserine modification. A phosphothreonine mark is found at Thr184 and Thr396. Residues 494 to 553 (STNGLFRPIGTQPPQQQQQQPSTNLQSNSFYGSSSLTNSSQSSSLFSHGPGQPGSTSLGF) form a disordered region. Residues 505–514 (QPPQQQQQQP) are compositionally biased toward low complexity. Polar residues predominate over residues 515–525 (STNLQSNSFYG). The segment covering 526 to 540 (SSSLTNSSQSSSLFS) has biased composition (low complexity). Phosphoserine occurs at positions 587 and 592. The disordered stretch occupies residues 620-650 (SPIGMPLPSQTPGHSLTPPPSLSSHGSSSSL). A compositionally biased stretch (low complexity) spans 630-650 (TPGHSLTPPPSLSSHGSSSSL). Arg674 bears the Omega-N-methylarginine mark. A phosphoserine mark is found at Ser684 and Ser700. One can recognise a PUM-HD domain in the interval 706 to 1048 (GRSRLLEDFR…HILAKLEKYY (343 aa)). Pumilio repeat units lie at residues 726–761 (DLIGHIVEFSQDQHGSRFIQQKLERATPAERQMVFN), 762–797 (EILQAAYQLMTDVFGNYVIQKFFEFGSLDQKLALAT), 798–835 (RIRGHVLPLALQMYGCRVIQKALESISSDQQVISEMVK), 836–871 (ELDGHVLKCVKDQNGNHVVQKCIECVQPQSLQFIID), 872–907 (AFKGQVFVLSTHPYGCRVIQRILEHCTAEQTLPILE), 908–943 (ELHQHTEQLVQDQYGNYVIQHVLEHGRPEDKSKIVS), 944–979 (EIRGKVLALSQHKFASNVVEKCVTHASRAERALLID), and 983–1022 (CQNDGPHSALYTMMKDQYANYVVQKMIDMAEPAQRKIIMH). The interval 741–745 (SRFIQ) is adenine-nucleotide binding in RNA target. The tract at residues 777–781 (NYVIQ) is uracil-nucleotide binding in RNA target. Residues 813 to 817 (CRVIQ) are adenine-nucleotide binding in RNA target. The interval 851-855 (NHVVQ) is non-specific-nucleotide binding in RNA target. An adenine-nucleotide binding in RNA target region spans residues 887–891 (CRVIQ). The segment at 923–927 (NYVIQ) is uracil-nucleotide binding in RNA target. The tract at residues 959–963 (SNVVE) is guanine-nucleotide binding in RNA target. A uracil-nucleotide binding in RNA target region spans residues 1002-1006 (NYVVQ).

As to quaternary structure, homodimer; homodimerizes in vitro. Interacts with DAZ1, DAZL and NANOS1 via its pumilio repeats. Interacts with NANOS3. Interacts with SNAPIN. Recruits the CCR4-POP2-NOT deadenylase leading to translational inhibition and mRNA degradation. Interacts with DDX20. In case of viral infection, interacts with DHX58. Interacts with TRIM71 (via NHL repeats) in an RNA-dependent manner. As to expression, expressed in male germ cells of adult testis (at protein level). Highly expressed in testis and ovary. Predominantly expressed in stem cells and germ cells. Expressed at lower level in brain, heart, kidney, liver, muscle, placenta, intestine and stomach Expressed in cerebellum, corpus callosum, caudate nucleus, hippocampus, medulla oblongata and putamen. Expressed in all fetal tissues tested.

It is found in the cytoplasm. The protein resides in the cytoplasmic granule. The protein localises to the perinuclear region. In terms of biological role, sequence-specific RNA-binding protein that acts as a post-transcriptional repressor by binding the 3'-UTR of mRNA targets. Binds to an RNA consensus sequence, the Pumilio Response Element (PRE), 5'-UGUANAUA-3', that is related to the Nanos Response Element (NRE) (, PubMed:21397187). Mediates post-transcriptional repression of transcripts via different mechanisms: acts via direct recruitment of the CCR4-POP2-NOT deadenylase leading to translational inhibition and mRNA degradation. Also mediates deadenylation-independent repression by promoting accessibility of miRNAs. Acts as a post-transcriptional repressor of E2F3 mRNAs by binding to its 3'-UTR and facilitating miRNA regulation. Plays a role in cytoplasmic sensing of viral infection. Represses a program of genes necessary to maintain genomic stability such as key mitotic, DNA repair and DNA replication factors. Its ability to repress those target mRNAs is regulated by the lncRNA NORAD (non-coding RNA activated by DNA damage) which, due to its high abundance and multitude of PUMILIO binding sites, is able to sequester a significant fraction of PUM1 and PUM2 in the cytoplasm. May regulate DCUN1D3 mRNA levels. May support proliferation and self-renewal of stem cells. Binds specifically to miRNA MIR199A precursor, with PUM1, regulates miRNA MIR199A expression at a postranscriptional level. The chain is Pumilio homolog 2 (PUM2) from Homo sapiens (Human).